A 160-amino-acid polypeptide reads, in one-letter code: Anaerobic nitrite reductase Glb1-1 (160 aa).

The Globin domain maps to 8 to 157 (GFTEEQEALV…LVNAIKSEMK (150 aa)). A Homodimerization motif is present at residues 41–45 (EIAPS). Heme b-binding residues include Ser-51, Lys-65, His-69, Lys-99, and His-104. A Homodimerization motif is present at residues 111–123 (DEHFEVTKFALLE).

This sequence belongs to the plant globin family. Homodimer. It depends on heme b as a cofactor.

The catalysed reaction is Fe(III)-heme b-[protein] + nitric oxide + H2O = Fe(II)-heme b-[protein] + nitrite + 2 H(+). In terms of biological role, phytoglobin that reduces nitrite to nitric oxide (NO) under anoxic conditions (e.g. during flooding or in waterlogged soil) and upon root nodulation. Required for general plant development and during nodulation, especially for the onset of symbiosis. Monitors nitric oxide (NO) levels during early phase of the nitrogen-fixing symbiosis and buffers oxygen in functioning nodules. May not function as an oxygen storage or transport protein. Has an unusually high affinity for O(2) through a hexacoordinate heme iron because of a very low dissociation constant. This is Anaerobic nitrite reductase Glb1-1 from Medicago truncatula (Barrel medic).